The primary structure comprises 183 residues: Ferritin heavy chain (183 aa).

Met-1 carries the post-translational modification N-acetylmethionine. Thr-2 carries the post-translational modification N-acetylthreonine; in Ferritin heavy chain, N-terminally processed. A Ferritin-like diiron domain is found at 11–160; sequence QNYHQDSEAA…DHVTNLRKMG (150 aa). The Fe cation site is built by Glu-28, Glu-63, His-66, Glu-108, and Gln-142. Ser-179 and Ser-183 each carry phosphoserine.

Belongs to the ferritin family. Oligomer of 24 subunits. There are two types of subunits: L (light) chain and H (heavy) chain. The major chain can be light or heavy, depending on the species and tissue type. The functional molecule forms a roughly spherical shell with a diameter of 12 nm and contains a central cavity into which the insoluble mineral iron core is deposited. Interacts with NCOA4; NCOA4 promotes targeting of the iron-binding ferritin complex to autolysosomes following starvation or iron depletion.

The protein localises to the cytoplasm. Its subcellular location is the lysosome. The protein resides in the cytoplasmic vesicle. It localises to the autophagosome. It catalyses the reaction 4 Fe(2+) + O2 + 4 H(+) = 4 Fe(3+) + 2 H2O. Its function is as follows. Stores iron in a soluble, non-toxic, readily available form. Important for iron homeostasis. Has ferroxidase activity. Iron is taken up in the ferrous form and deposited as ferric hydroxides after oxidation. Also plays a role in delivery of iron to cells. Mediates iron uptake in capsule cells of the developing kidney. Delivery to lysosomes is mediated by the cargo receptor NCOA4 for autophagic degradation and release of iron. The sequence is that of Ferritin heavy chain (FTH1) from Felis catus (Cat).